The following is a 383-amino-acid chain: Podocin (383 aa).

Residues 1–41 show a composition bias toward basic and acidic residues; the sequence is MERRARSSSRESRGRGGRTPHKENKRAKAERSGGGRGRQEA. Positions 1–76 are disordered; the sequence is MERRARSSSR…VDEVRGSGEE (76 aa). Residues 1–102 are Cytoplasmic-facing; it reads MERRARSSSR…TKSSGLGACE (102 aa). Residue Cys-101 is the site of S-palmitoyl cysteine attachment. The stretch at 103-123 is an intramembrane region; sequence WLLVLISLLFIIMTFPFSIWF. Over 124-383 the chain is Cytoplasmic; the sequence is CVKVVQEYER…NPKKKDSPML (260 aa). Gln-287 is a glycosylation site (N-linked (GlcNAc...) asparagine). The segment at 355–383 is disordered; the sequence is NRTQGSLPFPSPSKPVEPLNPKKKDSPML. Residues 374 to 383 show a composition bias toward basic and acidic residues; it reads NPKKKDSPML.

It belongs to the band 7/mec-2 family. Interacts with nephrin/NPHS1 and KIRREL1. Interacts directly with CD2AP. Interacts with DDN. Post-translationally, glycosylated. In terms of tissue distribution, almost exclusively expressed in the podocytes of fetal and mature kidney glomeruli.

The protein localises to the cell membrane. The protein resides in the endoplasmic reticulum. Its function is as follows. Plays a role in the regulation of glomerular permeability, acting probably as a linker between the plasma membrane and the cytoskeleton. This is Podocin (NPHS2) from Homo sapiens (Human).